The chain runs to 146 residues: UPF0178 protein BCA_3127 (146 aa).

It belongs to the UPF0178 family.

The protein is UPF0178 protein BCA_3127 of Bacillus cereus (strain 03BB102).